A 592-amino-acid polypeptide reads, in one-letter code: Probable oxidoreductase EphD (592 aa).

Residues 30–286 form the AB hydrolase-1 domain; the sequence is PTVVLVHGFP…KAGHFSPMSH (257 aa). Serine 461 is a binding site for substrate. Residue tyrosine 474 is the Proton acceptor of the active site.

The protein belongs to the short-chain dehydrogenases/reductases (SDR) family.

The chain is Probable oxidoreductase EphD (ephD) from Mycobacterium bovis (strain ATCC BAA-935 / AF2122/97).